A 1135-amino-acid chain; its full sequence is Envelopment polyprotein (1135 aa).

Residues 1-18 (MGIWKWLVMASLVWPVLT) form the signal peptide. Topologically, residues 19 to 485 (LRNVYDMKIE…VPGFHGWATA (467 aa)) are lumenal. 11 cysteine pairs are disulfide-bonded: C29/C151, C63/C157, C109/C128, C133/C138, C175/C185, C210/C247, C234/C351, C376/C435, C380/C389, C405/C424, and C452/C475. N134 carries N-linked (GlcNAc...) asparagine; by host glycosylation. N-linked (GlcNAc...) asparagine; by host glycans are attached at residues N235 and N347. N399 carries N-linked (GlcNAc...) asparagine; by host glycosylation. A helical transmembrane segment spans residues 486-506 (ALLVTFCFGWVLIPAITFIIL). Residues 507–627 (TVLKFIANIF…LNLFRYKSRC (121 aa)) are Cytoplasmic-facing. Residues 516 to 533 (FHTSNQENRLKSVLRKIK) are binding to the ribonucleoprotein. CCHC-type zinc fingers lie at residues 545–565 (CDVC…GVSC) and 570–591 (CPYC…YKVC). Binding to the ribonucleoprotein regions lie at residues 588–605 (YKVC…KKTV), 592–603 (QVTHRFRDDLKK), and 611–625 (TPGC…RYKS). The region spanning 611–634 (TPGCYRTLNLFRYKSRCYIFTMWI) is the ITAM domain. Positions 615 to 618 (YRTL) match the YxxL motif. A helical transmembrane segment spans residues 628-648 (YIFTMWIFLLVLESILWAASA). At 649-1105 (SETPLTPVWN…EWISGIFSGN (457 aa)) the chain is on the lumenal side. 8 disulfide bridges follow: C735-C770, C739-C777, C751-C885, C765-C896, C780-C904, C806-C815, C823-C832, and C863-C867. The interval 757 to 777 (YQYETSWGCNPSDCPGVGTGC) is fusion loop. N928 carries an N-linked (GlcNAc...) asparagine; by host glycan. Disulfide bonds link C970–C1000, C993–C1045, C1010–C1015, C1046–C1051, and C1085–C1089. Residues 1106-1126 (WIVLIVLCVFLLFSLVLLSIL) traverse the membrane as a helical segment. The interval 1122–1135 (LLSILCPVRKHKKS) is binding to the ribonucleoprotein. Over 1127 to 1135 (CPVRKHKKS) the chain is Cytoplasmic.

Belongs to the hantavirus envelope glycoprotein family. Homodimer. Homotetramer; forms heterotetrameric Gn-Gc spikes in the pre-fusion conformation. Interacts (via C-terminus) with the nucleoprotein. Interacts with host TUFM; this interaction contributes to the virus-induced degradation of mitochondria by autophagy, which leads to degradation of host MAVS and inhibition of type I interferon (IFN) responses. Interacts with host MAP1LC3B; this interaction contributes to the virus-induced degradation of mitochondria by autophagy, which leads to degradation of host MAVS and inhibition of type I interferon (IFN) responses. In terms of assembly, homotetramer; forms heterotetrameric Gn-Gc spikes in the pre-fusion conformation. Homotrimer; forms homotrimer in the post-fusion conformation at acidic pH. Interacts (via C-terminus) with the nucleoprotein. Post-translationally, specific enzymatic cleavage in vivo yield the mature proteins Glycoprotein N and Glycoprotein C.

Its subcellular location is the virion membrane. It is found in the host cell surface. The protein resides in the host Golgi apparatus membrane. The protein localises to the host endoplasmic reticulum membrane. It localises to the host mitochondrion. Functionally, forms homotetramers with glycoprotein C at the surface of the virion. Attaches the virion to host cell receptors including integrin ITGAV/ITGB3. This attachment induces virion internalization predominantly through clathrin-dependent endocytosis. May also bind to host C1QBP for virus entry into the host cell. Mediates the assembly and budding of infectious virus particles through its interaction with the nucleocapsid protein and the viral genome. May dysregulate normal immune and endothelial cell responses through an ITAM motif. Translocates to mitochondria, binds to host TUFM and recruits MAP1LC3B. These interactions induce mitochondrial autophagy and therefore destruction of host MAVS leading to inhibition of type I interferon (IFN) responses. Concomitant breakdown of glycoprotein N is apparently prevented by the nucleoprotein that may inhibit Gn-stimulated autophagosome-lysosome fusion. Interacts with the viral genomic RNA. In terms of biological role, homodimer. Homotetramer; forms heterotetrameric Gn-Gc spikes in the pre-fusion conformation. Attaches the virion to host cell receptors including integrin ITGAV/ITGB3. This attachment induces virion internalization predominantly through clathrin-dependent endocytosis. May also bind to host C1QBP for virus entry into the host cell. Class II fusion protein that promotes fusion of viral membrane with host endosomal membrane after endocytosis of the virion. In Apodemus agrarius (Eurasian field mouse), this protein is Envelopment polyprotein (GP).